We begin with the raw amino-acid sequence, 417 residues long: MITLTYRIETPGSVETMADKIASDQSTGTFVPVPGETEELKSRVAARVLAIRPLENARHPTWPESAPDTLLHRADVDIAFPLEAIGTDLSALMTIAIGGVYSIKGMTGIRIVDMKLPEAFRSAHPGPQFGIAGSRRLTGVEGRPIIGTIVKPALGLRPHETAELVGELIGSGVDFIKDDEKLMSPAYSPLKERVAAIMPRILDHEQKTGKKVMYAFGISHADPDEMMRNHDIVAAAGGNCAVVNINSIGFGGMSFLRKRSSLVLHAHRNGWDVLTRDPGAGMDFKVYQQFWRLLGVDQFQINGIRIKYWEPDESFVSSFKAVSTPLFDAADCPLPVAGSGQWGGQAPETYERTGRTIDLLYLCGGGIVSHPGGPAAGVRAVQQAWQAAVAGIPLEVYAKDHPELAASIAKFSDGKGA.

Residues K177, D179, and E180 each coordinate Mg(2+). N6-carboxylysine is present on K177.

Belongs to the RuBisCO large chain family. The cofactor is Mg(2+).

The catalysed reaction is 3-oxoisoapionate 4-phosphate + H(+) = L-erythrulose 1-phosphate + CO2. The protein operates within carbohydrate metabolism. In terms of biological role, involved in catabolism of D-apiose. Catalyzes the decarboxylation of 3-oxo-isoapionate 4-phosphate to L-erythrulose 1-phosphate. This Rhizobium etli (strain ATCC 51251 / DSM 11541 / JCM 21823 / NBRC 15573 / CFN 42) protein is 3-oxo-isoapionate-4-phosphate decarboxylase.